Consider the following 504-residue polypeptide: Glucose-6-phosphate isomerase (504 aa).

E333 (proton donor) is an active-site residue. Residues H364 and K473 contribute to the active site.

The protein belongs to the GPI family.

It localises to the cytoplasm. It catalyses the reaction alpha-D-glucose 6-phosphate = beta-D-fructose 6-phosphate. The protein operates within carbohydrate biosynthesis; gluconeogenesis. Its pathway is carbohydrate degradation; glycolysis; D-glyceraldehyde 3-phosphate and glycerone phosphate from D-glucose: step 2/4. In terms of biological role, catalyzes the reversible isomerization of glucose-6-phosphate to fructose-6-phosphate. The sequence is that of Glucose-6-phosphate isomerase from Xanthomonas oryzae pv. oryzae (strain KACC10331 / KXO85).